The sequence spans 560 residues: Dimethylaniline monooxygenase [N-oxide-forming] 4 (560 aa).

FAD contacts are provided by residues 9 to 13 (GAGVS), glutamate 32, and 40 to 41 (LW). NADP(+) is bound by residues 60 to 61 (TN) and 195 to 198 (TGGD). A helical transmembrane segment spans residues 510 to 530 (LSHYLIAWGAPVLLVSLLLIY).

This sequence belongs to the FMO family. FAD is required as a cofactor.

It is found in the microsome membrane. The protein localises to the endoplasmic reticulum membrane. It catalyses the reaction N,N-dimethylaniline + NADPH + O2 + H(+) = N,N-dimethylaniline N-oxide + NADP(+) + H2O. This protein is involved in the oxidative metabolism of a variety of xenobiotics such as drugs and pesticides. The protein is Dimethylaniline monooxygenase [N-oxide-forming] 4 (Fmo4) of Mus musculus (Mouse).